We begin with the raw amino-acid sequence, 307 residues long: MWNKEWAAKIPFMTYCEACRPHHWLKNGLLFVPVLICGRAEDLLQAPLWLAFMTFCSVASGIYVLNDLMDRAHDRRHPSKRHRPFASRKLSGLTGVWMCLVLIALGGVCAINCGERLFAITASYVALSVIYVGKVRGEYVLDLFVLSALYTTRILAGATAANIPVPASFLAFSAMAFVSLASIKRLNELTQLRRDGAPDLYGRGYELSDHSIVALICVSAGYAAVVFLELFVQMSSVAQGPAPIFVSNAMCVVVAYWISRAVVQAHRGDMRSDTLCYAVTDGSSLVCILGLALGLVFLMYCRSQSIG.

The next 8 membrane-spanning stretches (helical) occupy residues 46-66, 91-111, 117-137, 140-160, 163-183, 212-232, 238-258, and 279-299; these read APLW…YVLN, SGLT…VCAI, LFAI…KVRG, VLDL…GATA, IPVP…LASI, IVAL…ELFV, AQGP…AYWI, and VTDG…VFLM.

It localises to the cell membrane. The sequence is that of Nodulation protein NoeC (noeC) from Azorhizobium caulinodans (strain ATCC 43989 / DSM 5975 / JCM 20966 / LMG 6465 / NBRC 14845 / NCIMB 13405 / ORS 571).